Here is a 169-residue protein sequence, read N- to C-terminus: Peptide deformylase (169 aa).

Fe cation contacts are provided by Cys-91 and His-133. Glu-134 is an active-site residue. His-137 serves as a coordination point for Fe cation.

Belongs to the polypeptide deformylase family. Fe(2+) is required as a cofactor.

It carries out the reaction N-terminal N-formyl-L-methionyl-[peptide] + H2O = N-terminal L-methionyl-[peptide] + formate. Removes the formyl group from the N-terminal Met of newly synthesized proteins. Requires at least a dipeptide for an efficient rate of reaction. N-terminal L-methionine is a prerequisite for activity but the enzyme has broad specificity at other positions. The chain is Peptide deformylase from Haemophilus influenzae (strain 86-028NP).